Reading from the N-terminus, the 1409-residue chain is DNA-directed RNA polymerase subunit beta' (1409 aa).

Zn(2+) contacts are provided by Cys70, Cys72, Cys85, and Cys88. Residues Asp460, Asp462, and Asp464 each coordinate Mg(2+). Residues Cys822, Cys896, Cys903, and Cys906 each coordinate Zn(2+).

The protein belongs to the RNA polymerase beta' chain family. As to quaternary structure, the RNAP catalytic core consists of 2 alpha, 1 beta, 1 beta' and 1 omega subunit. When a sigma factor is associated with the core the holoenzyme is formed, which can initiate transcription. Mg(2+) serves as cofactor. Zn(2+) is required as a cofactor.

The enzyme catalyses RNA(n) + a ribonucleoside 5'-triphosphate = RNA(n+1) + diphosphate. Functionally, DNA-dependent RNA polymerase catalyzes the transcription of DNA into RNA using the four ribonucleoside triphosphates as substrates. This Methylobacillus flagellatus (strain ATCC 51484 / DSM 6875 / VKM B-1610 / KT) protein is DNA-directed RNA polymerase subunit beta'.